A 67-amino-acid polypeptide reads, in one-letter code: Small ribosomal subunit protein eS17 (67 aa).

Belongs to the eukaryotic ribosomal protein eS17 family.

The chain is Small ribosomal subunit protein eS17 from Thermococcus gammatolerans (strain DSM 15229 / JCM 11827 / EJ3).